Reading from the N-terminus, the 534-residue chain is MAQLGKLLKEQKYDRQLRLWGDHGQEALESAHVCLINATATGTEILKNLVLPGIGSFTIIDGNQVSGEDAGNNFFLQRSSIGKNRAEAAMEFLQELNSDVSGSFVEESPENLLDNDPSFFCRFTVVVATQLPESTSLRLADVLWNSQIPLLICRTYGLVGYMRIIIKEHPVIESHPDNALEDLRLDKPFPELREHFQSYDLDHMEKKDHSHTPWIVIIAKYLAQWYSETNGRIPKTYKEKEDFRDLIRQGILKNENGAPEDEENFEEAIKNVNTALNTTQIPSSIEDIFNDDRCINITKQTPSFWILARALKEFVAKEGQGNLPVRGTIPDMIADSGKYIKLQNVYREKAKKDAAAVGNHVAKLLQSIGQAPESISEKELKLLCSNSAFLRVVRCRSLAEEYGLDTINKDEIISSMDNPDNEIVLYLMLRAVDRFHKQQGRYPGVSNYQVEEDIGKLKSCLTGFLQEYGLSVMVKDDYVHEFCRYGAAEPHTIAAFLGGAAAQEVIKIITKQFVIFNNTYIYSGMSQTSATFQL.

An N-acetylalanine modification is found at Ala2. 2 positions are modified to N6-acetyllysine: Lys6 and Lys341. Residues 331–344 (DMIADSGKYIKLQN) form an interaction with UBA3 region.

This sequence belongs to the ubiquitin-activating E1 family. ULA1 subfamily. In terms of assembly, heterodimer of UBA3 and NAE1. The complex binds NEDD8 and UBE2M. Binds APP and TP53BP2. Post-translationally, ubiquitinated by TRIP12, leading to its degradation by the proteasome. Ubiquitous in fetal tissues. Expressed throughout the adult brain.

It localises to the cell membrane. It functions in the pathway protein modification; protein neddylation. Binding of TP53BP2 to the regulatory subunit NAE1 decreases neddylation activity. Functionally, regulatory subunit of the dimeric UBA3-NAE1 E1 enzyme. E1 activates NEDD8 by first adenylating its C-terminal glycine residue with ATP, thereafter linking this residue to the side chain of the catalytic cysteine, yielding a NEDD8-UBA3 thioester and free AMP. E1 finally transfers NEDD8 to the catalytic cysteine of UBE2M. Necessary for cell cycle progression through the S-M checkpoint. Overexpression of NAE1 causes apoptosis through deregulation of NEDD8 conjugation. The covalent attachment of NEDD8 to target proteins is known as 'neddylation' and the process is involved in the regulation of cell growth, viability and development. This chain is NEDD8-activating enzyme E1 regulatory subunit (NAE1), found in Homo sapiens (Human).